A 365-amino-acid polypeptide reads, in one-letter code: Methionine import ATP-binding protein MetN (365 aa).

The region spanning 17-256 (IVFEHVTKEF…PQSETTQRFL (240 aa)) is the ABC transporter domain. Residue 53–60 (GHSGAGKS) participates in ATP binding. The disordered stretch occupies residues 346 to 365 (SNSAAPTTSATVPTPTEEAH).

The protein belongs to the ABC transporter superfamily. Methionine importer (TC 3.A.1.24) family. As to quaternary structure, the complex is composed of two ATP-binding proteins (MetN), two transmembrane proteins (MetI) and a solute-binding protein (MetQ).

Its subcellular location is the cell membrane. It catalyses the reaction L-methionine(out) + ATP + H2O = L-methionine(in) + ADP + phosphate + H(+). The enzyme catalyses D-methionine(out) + ATP + H2O = D-methionine(in) + ADP + phosphate + H(+). In terms of biological role, part of the ABC transporter complex MetNIQ involved in methionine import. Responsible for energy coupling to the transport system. The polypeptide is Methionine import ATP-binding protein MetN (Cutibacterium acnes (strain DSM 16379 / KPA171202) (Propionibacterium acnes)).